A 531-amino-acid chain; its full sequence is Dihydropyrimidinase (531 aa).

Positions 103, 105, and 193 each coordinate Zn(2+). An N6-carboxylysine modification is found at lysine 193. Tyrosine 198 is a substrate binding site. Residues histidine 226 and histidine 282 each contribute to the Zn(2+) site. Serine 332 lines the substrate pocket. Aspartate 359 lines the Zn(2+) pocket. A substrate-binding site is contributed by asparagine 380.

It belongs to the metallo-dependent hydrolases superfamily. Hydantoinase/dihydropyrimidinase family. In terms of assembly, homotetramer. Requires Zn(2+) as cofactor. Post-translationally, carboxylation allows a single lysine to coordinate two zinc ions.

It localises to the endoplasmic reticulum. The catalysed reaction is 5,6-dihydrouracil + H2O = 3-(carbamoylamino)propanoate + H(+). Its pathway is amino-acid biosynthesis; beta-alanine biosynthesis. Catalyzes the second step of the reductive pyrimidine degradation, the reversible hydrolytic ring opening of dihydropyrimidines. Can catalyze the ring opening of 5,6-dihydrouracil to N-carbamoyl-alanine and of 5,6-dihydrothymine to N-carbamoyl-amino isobutyrate. Involved in the recycling of nitrogen from nucleobases to general nitrogen metabolism. The polypeptide is Dihydropyrimidinase (Arabidopsis thaliana (Mouse-ear cress)).